A 473-amino-acid polypeptide reads, in one-letter code: Nitrogenase vanadium-iron protein alpha chain (473 aa).

Residues cysteine 49, cysteine 74, and cysteine 137 each coordinate [8Fe-7S] cluster. [7Fe-V-9S-C-homocitryl] cluster is bound by residues cysteine 256 and histidine 422.

This sequence belongs to the NifD/NifK/NifE/NifN family. As to quaternary structure, hexamer of two alpha, two beta, and two delta chains. [8Fe-7S] cluster is required as a cofactor. It depends on [7Fe-V-9S-C-homocitryl] cluster as a cofactor.

It carries out the reaction N2 + 8 reduced [2Fe-2S]-[ferredoxin] + 16 ATP + 16 H2O = H2 + 8 oxidized [2Fe-2S]-[ferredoxin] + 2 NH4(+) + 16 ADP + 16 phosphate + 6 H(+). In terms of biological role, this vanadium-iron protein is part of the nitrogenase complex that catalyzes the key enzymatic reactions in nitrogen fixation. The polypeptide is Nitrogenase vanadium-iron protein alpha chain (vnfD) (Azotobacter chroococcum mcd 1).